The primary structure comprises 345 residues: Guanine nucleotide-binding protein G(i) subunit alpha-3 (345 aa).

The region spanning 23–345 (KEVKLLLLGA…KSNLMECGLY (323 aa)) is the G-alpha domain. The tract at residues 26-39 (KLLLLGAGESGKST) is G1 motif. Residues glycine 33, glutamate 34, serine 35, glycine 36, lysine 37, serine 38, threonine 39, aspartate 141, serine 142, leucine 166, arginine 167, threonine 168, arginine 169, valine 170, lysine 171, threonine 172, valine 192, glycine 194, asparagine 260, lysine 261, aspartate 263, leucine 264, cysteine 316, alanine 317, and threonine 318 each contribute to the GTP site. A Mg(2+)-binding site is contributed by serine 38. The segment at 164–172 (DVLRTRVKT) is G2 motif. Threonine 172 lines the Mg(2+) pocket. Residues 187-196 (FKMFDVGGQR) form a G3 motif region. Positions 256 to 263 (ILFLNKKD) are G4 motif. The segment at 315-320 (TCATDT) is G5 motif.

Belongs to the G-alpha family. G(i/o/t/z) subfamily. Heterotrimeric G proteins are composed of 3 units; alpha, beta and gamma. The alpha subunit contains the guanine nucleotide binding site. GTP binding causes dissociation of the heterotrimer, liberating the individual subunits so that they can interact with downstream effector proteins.

The protein localises to the cytoplasm. It localises to the cell membrane. The protein resides in the cytoskeleton. Its subcellular location is the microtubule organizing center. It is found in the centrosome. The protein localises to the membrane. Heterotrimeric guanine nucleotide-binding proteins (G proteins) function as transducers downstream of G protein-coupled receptors (GPCRs) in numerous signaling cascades. The alpha chain contains the guanine nucleotide binding site and alternates between an active, GTP-bound state and an inactive, GDP-bound state. Signaling by an activated GPCR promotes GDP release and GTP binding. The alpha subunit has a low GTPase activity that converts bound GTP to GDP, thereby terminating the signal. Both GDP release and GTP hydrolysis are modulated by numerous regulatory proteins. Signaling is mediated via effector proteins, such as adenylate cyclase. Inhibits adenylate cyclase activity, leading to decreased intracellular cAMP levels. Stimulates the activity of receptor-regulated K(+) channels. The active GTP-bound form prevents the association of RGS14 with centrosomes and is required for the translocation of RGS14 from the cytoplasm to the plasma membrane. May play a role in cell division. The active GTP-bound form activates the calcium permeant TRPC5 ion channels. The chain is Guanine nucleotide-binding protein G(i) subunit alpha-3 (gnai3) from Xenopus laevis (African clawed frog).